A 613-amino-acid chain; its full sequence is DNA repair and telomere maintenance protein nbs1 (613 aa).

An FHA domain is found at Tyr23 to Val86. BRCT domains are found at residues Phe107 to Thr186 and Gly228 to Ile302. Residue Ser355 is modified to Phosphoserine. Disordered regions lie at residues Lys381 to Lys428 and Thr546 to Phe613. Polar residues predominate over residues Leu387–Lys399. Basic and acidic residues predominate over residues Lys400 to Lys409. Over residues Ser574–Lys592 the composition is skewed to low complexity. The short motif at Phe611–Phe613 is the FxF/Y motif element.

Belongs to the Nibrin family. As to quaternary structure, component of the MRN complex composed of two heterodimers rad32 and rad50 associated with a single nbs1. Interacts with (phosphorylated) ctp1/CtIP. Interacts (via FxF/Y motif) with tel1/atm.

It localises to the nucleus. The protein localises to the chromosome. Its subcellular location is the telomere. Its function is as follows. Component of the MRN complex, which plays a central role in double-strand break (DSB) repair, DNA recombination, maintenance of telomere integrity and meiosis. The MRN complex is involved in the repair of DNA double-strand breaks (DSBs) via homologous recombination (HR), an error-free mechanism which primarily occurs during S and G2 phases. The complex (1) mediates the end resection of damaged DNA, which generates proper single-stranded DNA, a key initial steps in HR, and is (2) required for the recruitment of other repair factors and efficient activation of tel1/atm upon DNA damage. The MRN complex possesses single-strand endonuclease activity and double-strand-specific 3'-5' exonuclease activity, which are provided by MRE11, to initiate end resection, which is required for single-strand invasion and recombination. Within the MRN complex, nbs1 acts as a protein-protein adapter, which specifically recognizes and binds phosphorylated proteins, promoting their recruitment to DNA damage sites. Recruits rad32 and rad50 components of the MRN complex to DSBs in response to DNA damage. Promotes the recruitment of tel1/atm to the DNA damage sites, activating tel1/atm function. Mediates the recruitment of phosphorylated ctp1/CtIP to DSBs, leading to cooperation between the MRN complex and ctp1/CtIP to initiate end resection. This chain is DNA repair and telomere maintenance protein nbs1, found in Schizosaccharomyces pombe (strain 972 / ATCC 24843) (Fission yeast).